The chain runs to 395 residues: Acetate kinase (395 aa).

Asn10 is a Mg(2+) binding site. Lys17 provides a ligand contact to ATP. Arg87 serves as a coordination point for substrate. Catalysis depends on Asp144, which acts as the Proton donor/acceptor. Residues 204–208, 279–281, and 327–331 contribute to the ATP site; these read HLGNG, DMR, and GIGEN. Glu381 contributes to the Mg(2+) binding site.

The protein belongs to the acetokinase family. In terms of assembly, homodimer. Mg(2+) serves as cofactor. It depends on Mn(2+) as a cofactor.

It localises to the cytoplasm. The catalysed reaction is acetate + ATP = acetyl phosphate + ADP. It functions in the pathway metabolic intermediate biosynthesis; acetyl-CoA biosynthesis; acetyl-CoA from acetate: step 1/2. Its function is as follows. Catalyzes the formation of acetyl phosphate from acetate and ATP. Can also catalyze the reverse reaction. The chain is Acetate kinase from Stutzerimonas stutzeri (strain A1501) (Pseudomonas stutzeri).